The chain runs to 349 residues: Hydroxymethylglutaryl-CoA synthase (349 aa).

The (3S)-3-hydroxy-3-methylglutaryl-CoA site is built by D29 and A30. Catalysis depends on E81, which acts as the Proton donor/acceptor. Residues C113 and T154 each contribute to the (3S)-3-hydroxy-3-methylglutaryl-CoA site. Catalysis depends on C113, which acts as the Acyl-thioester intermediate. Residue R202 coordinates CoA. T204 and H237 together coordinate (3S)-3-hydroxy-3-methylglutaryl-CoA. H237 acts as the Proton donor/acceptor in catalysis. K242 contacts CoA. (3S)-3-hydroxy-3-methylglutaryl-CoA-binding residues include K246, N269, and S299.

This sequence belongs to the thiolase-like superfamily. Archaeal HMG-CoA synthase family. Interacts with acetoacetyl-CoA thiolase that catalyzes the precedent step in the pathway and with a DUF35 protein. The acetoacetyl-CoA thiolase/HMG-CoA synthase complex channels the intermediate via a fused CoA-binding site, which allows for efficient coupling of the endergonic thiolase reaction with the exergonic HMGCS reaction.

The enzyme catalyses acetoacetyl-CoA + acetyl-CoA + H2O = (3S)-3-hydroxy-3-methylglutaryl-CoA + CoA + H(+). Its pathway is metabolic intermediate biosynthesis; (R)-mevalonate biosynthesis; (R)-mevalonate from acetyl-CoA: step 2/3. In terms of biological role, catalyzes the condensation of acetyl-CoA with acetoacetyl-CoA to form 3-hydroxy-3-methylglutaryl-CoA (HMG-CoA). Functions in the mevalonate (MVA) pathway leading to isopentenyl diphosphate (IPP), a key precursor for the biosynthesis of isoprenoid compounds that are building blocks of archaeal membrane lipids. The sequence is that of Hydroxymethylglutaryl-CoA synthase from Methanosarcina acetivorans (strain ATCC 35395 / DSM 2834 / JCM 12185 / C2A).